The primary structure comprises 162 residues: VLLDGFIRKFVLCPECENPETELLVSTKRSTISQGCKACGYHSPLESNHKLVTFILKNPPNLNPAVQGSSLTEGKRSKRSKRPNGDTNGDTSQVDDQNESLEASVNENSKNGDDDEGHEWQADVSEEAVRARMQDLTEGAKNMTINDDLEKREKDRMDIFYE.

Residues 59–162 (PPNLNPAVQG…EKDRMDIFYE (104 aa)) form a disordered region. A compositionally biased stretch (polar residues) spans 85–109 (GDTNGDTSQVDDQNESLEASVNENS). Residues 148–162 (DLEKREKDRMDIFYE) show a composition bias toward basic and acidic residues.

The protein belongs to the eIF-2-beta/eIF-5 family.

Catalyzes the hydrolysis of GTP bound to the 40S ribosomal initiation complex (40S.mRNA.Met-tRNA[F].eIF-2.GTP) with the subsequent joining of a 60S ribosomal subunit resulting in the release of eIF-2 and the guanine nucleotide. The subsequent joining of a 60S ribosomal subunit results in the formation of a functional 80S initiation complex (80S.mRNA.Met-tRNA[F]). This Tribolium castaneum (Red flour beetle) protein is Eukaryotic translation initiation factor 5.